Here is a 1259-residue protein sequence, read N- to C-terminus: Ankyrin repeat and sterile alpha motif domain-containing protein 1B (1259 aa).

ANK repeat units follow at residues 2–31, 58–87, 91–120, 127–156, 160–189, 193–222, and 225–254; these read GKDQ…GGIL, SGYT…STNV, KGYF…SHSR, ENET…DPTI, KLET…NLMS, RKHT…DVSC, and EKGS…DANI. Residues 298–325 form a disordered region; the sequence is HAQEDTAQETHLSSPAESPQKTKSETVT. A compositionally biased stretch (polar residues) spans 306-325; it reads ETHLSSPAESPQKTKSETVT. Phosphoserine occurs at positions 310, 311, 315, 353, and 364. Disordered stretches follow at residues 367 to 401, 490 to 513, 556 to 614, and 631 to 661; these read ELGK…SCGP, PGTS…SPDT, CTSF…GSSP, and TCED…EPSV. Residues 371-384 show a composition bias toward polar residues; that stretch reads NGSQSVRTSSTINL. Threonine 503 is modified (phosphothreonine). Phosphoserine is present on residues serine 507 and serine 510. Residues 556 to 574 show a composition bias toward low complexity; the sequence is CTSFTSSPAASPPTSSVET. Residues 575–587 are compositionally biased toward basic and acidic residues; sequence TEVKNEGAEHADD. The residue at position 738 (serine 738) is a Phosphoserine. Positions 753–776 are disordered; that stretch reads VNWSKSSTAERSSKDNSERTPSFT. Residue threonine 772 is modified to Phosphothreonine. Position 774 is a phosphoserine (serine 774). 2 SAM domains span residues 809-875 and 883-948; these read CPVQ…LPKM and YHPT…RLHD. Position 900 is a phosphotyrosine (tyrosine 900). Residue histidine 934 is a short sequence motif, nuclear localization signal. The tract at residues 943–988 is disordered; sequence GDRLHDDPPQKPPRSITLREPSGNHTPPQLSPSLSQSTYTTGGSLD. Over residues 968 to 983 the composition is skewed to low complexity; that stretch reads TPPQLSPSLSQSTYTT. At serine 973 the chain carries Phosphoserine. Residue tyrosine 1006 is modified to Phosphotyrosine. The PID domain occupies 1055–1212; the sequence is IFQSCDYKAF…SFENKPSKPI (158 aa). The segment at 1196 to 1216 is disordered; it reads HSSTLPESFENKPSKPIPKPR.

Interacts with EPHA8. Isoform 2 interacts with COIL.

The protein localises to the cytoplasm. It localises to the nucleus. Its subcellular location is the postsynaptic density. The protein resides in the cell projection. It is found in the dendritic spine. Functionally, isoform 2 may participate in the regulation of nucleoplasmic coilin protein interactions in neuronal and transformed cells. In Mus musculus (Mouse), this protein is Ankyrin repeat and sterile alpha motif domain-containing protein 1B (Anks1b).